We begin with the raw amino-acid sequence, 152 residues long: Mitochondrial fission 1 protein (152 aa).

N-acetylmethionine is present on Met1. Residues 1-122 (MEAVLNELVS…LIDKAMKKDG (122 aa)) lie on the Cytoplasmic side of the membrane. Phosphoserine is present on Ser10. The stretch at 71-104 (RDYVFYLAVGNYRLKEYEKALKYVRGLLQTEPQN) is one TPR repeat. Residues 123 to 143 (LVGMAIVGGMALGVAGLAGLI) traverse the membrane as a helical segment. Residues 144-152 (GLAVSKSKS) lie on the Mitochondrial intermembrane side of the membrane.

It belongs to the FIS1 family. Interacts with DNM1L/DLP1 through the TPR region; may form part of a larger protein complex at the endoplasmic reticulum-mitochondrial interface during mitochondrial fission. Interacts with MARCHF5. Interacts with MIEF1. Interacts with PEX11A, PEX11B and PEX11G. In terms of processing, ubiquitinated by MARCHF5.

It is found in the mitochondrion outer membrane. Its subcellular location is the peroxisome membrane. Involved in the fragmentation of the mitochondrial network and its perinuclear clustering. Plays a minor role in the recruitment and association of the fission mediator dynamin-related protein 1 (DNM1L) to the mitochondrial surface and mitochondrial fission. May not be essential for the assembly of functional fission complexes and the subsequent membrane scission event. Also mediates peroxisomal fission. May act when the products of fission are directed toward mitochondrial homeostasis, mitophagy, or apoptosis. Can induce cytochrome c release from the mitochondrion to the cytosol, ultimately leading to apoptosis. The polypeptide is Mitochondrial fission 1 protein (Fis1) (Mus musculus (Mouse)).